Here is a 362-residue protein sequence, read N- to C-terminus: Ribosome-binding ATPase YchF (362 aa).

Residues 3–255 (FKCGIIGLPN…MNEDEQKYFM (253 aa)) enclose the OBG-type G domain. 12-17 (NVGKST) contributes to the ATP binding site. Residues serine 16 and threonine 36 each coordinate Mg(2+). One can recognise a TGS domain in the interval 277-360 (NLITFFTAGI…QDGDIINFLF (84 aa)).

Belongs to the TRAFAC class OBG-HflX-like GTPase superfamily. OBG GTPase family. YchF/OLA1 subfamily. Mg(2+) serves as cofactor.

Its function is as follows. ATPase that binds to both the 70S ribosome and the 50S ribosomal subunit in a nucleotide-independent manner. The polypeptide is Ribosome-binding ATPase YchF (Buchnera aphidicola subsp. Schizaphis graminum (strain Sg)).